The chain runs to 655 residues: FYVE, RhoGEF and PH domain-containing protein 2 (655 aa).

Ser10, Ser39, and Ser47 each carry phosphoserine. Disordered stretches follow at residues 21–52 (NRTP…EPWE) and 84–103 (WRRS…EPEE). The span at 32 to 41 (SLEDQPHSPE) shows a compositional bias: basic and acidic residues. The DH domain occupies 102-290 (EEKRVVRELL…FSAAQHSNAA (189 aa)). In terms of domain architecture, PH 1 spans 319-418 (TLLREGPVLK…WMQACQAAID (100 aa)). The FYVE-type zinc-finger motif lies at 458–518 (DKMVTMCMRC…VCLTCYTFLT (61 aa)). 8 residues coordinate Zn(2+): Cys464, Cys467, Cys481, Cys484, Cys489, Cys492, Cys510, and Cys513. The PH 2 domain maps to 544 to 641 (QSLVCSFLQL…WVTAIKRAAS (98 aa)). A Phosphothreonine modification is found at Thr644. Ser654 carries the post-translational modification Phosphoserine.

As to expression, lymph node, spleen, B-lymphocytes and macrophages (at protein level). Expressed at high levels in lymph node, spleen, B-lymphocytes and bone marrow macrophages. Expressed at lower levels in mature bone marrow dendritic cells. In both immature and mature B-cells, expression is down-regulated by prior B-cell receptor signaling. Expression remains high in resting B and memory cells but declines upon differentiation into plasma cells.

It is found in the cytoplasm. The protein resides in the nucleus. Its subcellular location is the early endosome. The protein localises to the early endosome membrane. It localises to the cell projection. It is found in the ruffle membrane. The protein resides in the cytoskeleton. Functionally, activates CDC42, a member of the Ras-like family of Rho- and Rac proteins, by exchanging bound GDP for free GTP. Activates JNK1 via CDC42 but not RAC1. Binds to phosphatidylinositol 4,5-bisphosphate, phosphatidylinositol 3,4,5-trisphosphate, phosphatidylinositol 5-monophosphate, phosphatidylinositol 4-monophosphate and phosphatidylinositol 3-monophosphate. This chain is FYVE, RhoGEF and PH domain-containing protein 2 (Fgd2), found in Mus musculus (Mouse).